A 172-amino-acid chain; its full sequence is uncharacterized protein (172 aa).

This is an uncharacterized protein from Microplitis demolitor bracovirus (isolate Webb) (MdBV).